The following is a 118-amino-acid chain: Small ribosomal subunit protein uS13 (118 aa).

The segment at 91 to 118 is disordered; it reads HRRGLPVRGQRTKTNARTRKGPRKPIKK.

Belongs to the universal ribosomal protein uS13 family. Part of the 30S ribosomal subunit. Forms a loose heterodimer with protein S19. Forms two bridges to the 50S subunit in the 70S ribosome.

Functionally, located at the top of the head of the 30S subunit, it contacts several helices of the 16S rRNA. In the 70S ribosome it contacts the 23S rRNA (bridge B1a) and protein L5 of the 50S subunit (bridge B1b), connecting the 2 subunits; these bridges are implicated in subunit movement. Contacts the tRNAs in the A and P-sites. This is Small ribosomal subunit protein uS13 from Serratia proteamaculans (strain 568).